Consider the following 403-residue polypeptide: Vacuole membrane protein 1 homolog (403 aa).

Residues 7 to 33 (IVLSNEKDIQLRIQQLEERKEKRKNVK) adopt a coiled-coil conformation. Transmembrane regions (helical) follow at residues 65–85 (FLLF…YVPG), 102–122 (IWWV…LHTF), 150–170 (ANSF…WMIL), 175–195 (WAAL…YFVA), 240–260 (LIGN…NPLF), 263–283 (AGIT…ATFI), 294–314 (ACFV…SFIE), and 348–368 (VGLA…MSIV).

It belongs to the VMP1 family.

The protein localises to the membrane. The protein resides in the endoplasmic reticulum. The enzyme catalyses a 1,2-diacyl-sn-glycero-3-phospho-L-serine(in) = a 1,2-diacyl-sn-glycero-3-phospho-L-serine(out). It catalyses the reaction cholesterol(in) = cholesterol(out). It carries out the reaction a 1,2-diacyl-sn-glycero-3-phosphocholine(in) = a 1,2-diacyl-sn-glycero-3-phosphocholine(out). The catalysed reaction is a 1,2-diacyl-sn-glycero-3-phosphoethanolamine(in) = a 1,2-diacyl-sn-glycero-3-phosphoethanolamine(out). Functionally, phospholipid scramblase involved in lipid homeostasis and membrane dynamics processes. Required for autophagosome formation: participates in early stages of autophagosome biogenesis at the endoplasmic reticulum (ER) membrane by reequilibrating the leaflets of the ER as lipids are extracted. In addition to autophagy, involved in other processes in which phospholipid scramblase activity is required. The chain is Vacuole membrane protein 1 homolog from Dictyostelium discoideum (Social amoeba).